The following is a 132-amino-acid chain: ATP synthase epsilon chain (132 aa).

It belongs to the ATPase epsilon chain family. As to quaternary structure, F-type ATPases have 2 components, CF(1) - the catalytic core - and CF(0) - the membrane proton channel. CF(1) has five subunits: alpha(3), beta(3), gamma(1), delta(1), epsilon(1). CF(0) has three main subunits: a, b and c.

The protein resides in the cell inner membrane. In terms of biological role, produces ATP from ADP in the presence of a proton gradient across the membrane. The sequence is that of ATP synthase epsilon chain from Anaeromyxobacter sp. (strain Fw109-5).